The sequence spans 316 residues: Succinoglycan biosynthesis protein ExoV (316 aa).

The protein operates within glycan metabolism; exopolysaccharide biosynthesis. This Rhizobium meliloti (strain 1021) (Ensifer meliloti) protein is Succinoglycan biosynthesis protein ExoV (exoV).